Here is a 702-residue protein sequence, read N- to C-terminus: Phosphoglycerol transferase I (702 aa).

3 consecutive transmembrane segments (helical) span residues H2 to L22, F71 to L91, and G103 to L123.

Belongs to the OpgB family.

The protein resides in the cell inner membrane. It carries out the reaction a phosphatidylglycerol + a membrane-derived-oligosaccharide D-glucose = a 1,2-diacyl-sn-glycerol + a membrane-derived-oligosaccharide 6-(glycerophospho)-D-glucose.. The protein operates within glycan metabolism; osmoregulated periplasmic glucan (OPG) biosynthesis. Its function is as follows. Transfers a phosphoglycerol residue from phosphatidylglycerol to the membrane-bound nascent glucan backbones. In Xanthomonas euvesicatoria pv. vesicatoria (strain 85-10) (Xanthomonas campestris pv. vesicatoria), this protein is Phosphoglycerol transferase I.